We begin with the raw amino-acid sequence, 134 residues long: Snaclec alboaggregin-A subunit alpha' (134 aa).

In terms of domain architecture, C-type lectin spans 1–134; sequence DFHCLPGWSA…NPFVCKFPPQ (134 aa). Intrachain disulfides connect C4–C15, C32–C129, and C104–C121.

This sequence belongs to the snaclec family. In terms of assembly, heterotetramer of the subunits alpha, alpha', beta and beta'; disulfide-linked. As to expression, expressed by the venom gland.

It localises to the secreted. Its function is as follows. Potent platelet activator that aggregates platelets via both GPIbalpha (GP1BA) and GPVI (GP6). Induces a tyrosine phosphorylation profile in platelets that resembles this produced by collagen, involving the time dependent tyrosine phosphorylation of Fc receptor gamma chain (FCGR1A), phospholipase Cgamma2 (PLCG2), and LAT. This is Snaclec alboaggregin-A subunit alpha' from Trimeresurus albolabris (White-lipped pit viper).